The following is a 343-amino-acid chain: D-alanine--D-alanine ligase (343 aa).

The ATP-grasp domain maps to 132–337 (KNLFSYHKIP…YPDLIDKLIE (206 aa)). 165 to 220 (DRFLGWPCFVKPANMGSSIGVSKVHSPGEVKKALEKGFYYDRKLIFEEFVEGREIE) lines the ATP pocket. Mg(2+)-binding residues include Asp291, Glu304, and Asn306.

This sequence belongs to the D-alanine--D-alanine ligase family. It depends on Mg(2+) as a cofactor. Mn(2+) serves as cofactor.

The protein resides in the cytoplasm. The enzyme catalyses 2 D-alanine + ATP = D-alanyl-D-alanine + ADP + phosphate + H(+). Its pathway is cell wall biogenesis; peptidoglycan biosynthesis. Functionally, cell wall formation. The chain is D-alanine--D-alanine ligase from Halothermothrix orenii (strain H 168 / OCM 544 / DSM 9562).